Reading from the N-terminus, the 456-residue chain is Cysteine--tRNA ligase (456 aa).

A Zn(2+)-binding site is contributed by Cys28. Residues 30-40 carry the 'HIGH' region motif; that stretch reads MTVYDYCHLGH. Residues Cys209, His234, and Glu238 each contribute to the Zn(2+) site. Residues 266 to 270 carry the 'KMSKS' region motif; it reads KMSKS. An ATP-binding site is contributed by Lys269.

This sequence belongs to the class-I aminoacyl-tRNA synthetase family. Monomer. Requires Zn(2+) as cofactor.

The protein localises to the cytoplasm. The catalysed reaction is tRNA(Cys) + L-cysteine + ATP = L-cysteinyl-tRNA(Cys) + AMP + diphosphate. The protein is Cysteine--tRNA ligase of Dechloromonas aromatica (strain RCB).